Consider the following 63-residue polypeptide: Large ribosomal subunit protein bL28 (63 aa).

It belongs to the bacterial ribosomal protein bL28 family.

This is Large ribosomal subunit protein bL28 from Clostridium perfringens (strain SM101 / Type A).